The following is an 83-amino-acid chain: MDLSFMAAQLPMMGGAFMDSPNEDFSTEYSLFNSSANVHAAANGQGQPEDPPRSSNDAVLLWIAIIATLGNIVVVGVVYAFTF.

Residues 58–78 (AVLLWIAIIATLGNIVVVGVV) form a helical membrane-spanning segment.

It localises to the membrane. This is an uncharacterized protein from Homo sapiens (Human).